The primary structure comprises 242 residues: Uridylate kinase (242 aa).

Residue 16 to 19 coordinates ATP; sequence KVSG. Gly-58 contributes to the UMP binding site. Residues Gly-59 and Arg-63 each coordinate ATP. UMP contacts are provided by residues Asp-78 and 139–146; that span reads TGNPFCTT. ATP contacts are provided by Thr-166, Gln-167, Tyr-172, and Asp-175.

Belongs to the UMP kinase family. As to quaternary structure, homohexamer.

Its subcellular location is the cytoplasm. It carries out the reaction UMP + ATP = UDP + ADP. It participates in pyrimidine metabolism; CTP biosynthesis via de novo pathway; UDP from UMP (UMPK route): step 1/1. Its activity is regulated as follows. Inhibited by UTP. Catalyzes the reversible phosphorylation of UMP to UDP. This chain is Uridylate kinase, found in Rickettsia conorii (strain ATCC VR-613 / Malish 7).